The sequence spans 179 residues: Acireductone dioxygenase (179 aa).

A disordered region spans residues 7-26; it reads MDDAPGDPRQPHRPDPGRPV. 4 residues coordinate Fe(2+): His88, His90, Glu94, and His133. Positions 88, 90, 94, and 133 each coordinate Ni(2+).

It belongs to the acireductone dioxygenase (ARD) family. Monomer. Interacts with MMP14. Fe(2+) is required as a cofactor. It depends on Ni(2+) as a cofactor. In terms of tissue distribution, detected in heart, colon, lung, stomach, brain, spleen, liver, skeletal muscle and kidney.

It is found in the cytoplasm. The protein localises to the nucleus. The protein resides in the cell membrane. The catalysed reaction is 1,2-dihydroxy-5-(methylsulfanyl)pent-1-en-3-one + O2 = 4-methylsulfanyl-2-oxobutanoate + formate + 2 H(+). It carries out the reaction 1,2-dihydroxy-5-(methylsulfanyl)pent-1-en-3-one + O2 = 3-(methylsulfanyl)propanoate + CO + formate + 2 H(+). The protein operates within amino-acid biosynthesis; L-methionine biosynthesis via salvage pathway; L-methionine from S-methyl-5-thio-alpha-D-ribose 1-phosphate: step 5/6. Functionally, catalyzes 2 different reactions between oxygen and the acireductone 1,2-dihydroxy-3-keto-5-methylthiopentene (DHK-MTPene) depending upon the metal bound in the active site. Fe-containing acireductone dioxygenase (Fe-ARD) produces formate and 2-keto-4-methylthiobutyrate (KMTB), the alpha-ketoacid precursor of methionine in the methionine recycle pathway. Ni-containing acireductone dioxygenase (Ni-ARD) produces methylthiopropionate, carbon monoxide and formate, and does not lie on the methionine recycle pathway. Also down-regulates cell migration mediated by MMP14. Necessary for hepatitis C virus replication in an otherwise non-permissive cell line. In Homo sapiens (Human), this protein is Acireductone dioxygenase.